Reading from the N-terminus, the 144-residue chain is Ribonuclease VapC1 (144 aa).

A PINc domain is found at 6–132 (VFVDGNVIVD…SFYSPDIEVL (127 aa)). Residues Asp9 and Asp102 each contribute to the Mg(2+) site.

It belongs to the PINc/VapC protein family. Mg(2+) serves as cofactor.

In terms of biological role, toxic component of a type II toxin-antitoxin (TA) system. An RNase. In Aquifex aeolicus (strain VF5), this protein is Ribonuclease VapC1.